The chain runs to 434 residues: Methylenetetrahydrofolate--tRNA-(uracil-5-)-methyltransferase TrmFO (434 aa).

9–14 (GAGLAG) serves as a coordination point for FAD.

It belongs to the MnmG family. TrmFO subfamily. FAD serves as cofactor.

The protein resides in the cytoplasm. The catalysed reaction is uridine(54) in tRNA + (6R)-5,10-methylene-5,6,7,8-tetrahydrofolate + NADH + H(+) = 5-methyluridine(54) in tRNA + (6S)-5,6,7,8-tetrahydrofolate + NAD(+). It carries out the reaction uridine(54) in tRNA + (6R)-5,10-methylene-5,6,7,8-tetrahydrofolate + NADPH + H(+) = 5-methyluridine(54) in tRNA + (6S)-5,6,7,8-tetrahydrofolate + NADP(+). Its function is as follows. Catalyzes the folate-dependent formation of 5-methyl-uridine at position 54 (M-5-U54) in all tRNAs. This Listeria monocytogenes serovar 1/2a (strain ATCC BAA-679 / EGD-e) protein is Methylenetetrahydrofolate--tRNA-(uracil-5-)-methyltransferase TrmFO.